The following is a 343-amino-acid chain: Mitotic checkpoint protein bub-3 (343 aa).

WD repeat units follow at residues Pro-21–Glu-62, Thr-67–Leu-105, Ser-107–Ile-146, Asn-150–Gln-187, Pro-192–Lys-232, Glu-249–Gln-288, and Lys-291–Thr-331. Residues Pro-322–Lys-343 form a disordered region. Basic and acidic residues predominate over residues His-334 to Lys-343.

It belongs to the WD repeat BUB3 family. In terms of assembly, may interact with bub-1; for localization at the kinetochore and the onset of anaphase.

It localises to the chromosome. The protein resides in the centromere. The protein localises to the kinetochore. Its subcellular location is the nucleus. In terms of biological role, has a dual function in spindle-assembly checkpoint signaling and in promoting the establishment of correct kinetochore-microtubule (K-MT) attachments. Promotes the formation of stable end-on bipolar attachments of chromosomes. Necessary for expression and kinetochore localization of bub-1. Plays a role in synapsis checkpoint signaling inducing apoptosis in response to unsynapsed chromosomes and thus controlling chromosomal segregation during oocyte meiosis. The polypeptide is Mitotic checkpoint protein bub-3 (Caenorhabditis elegans).